A 117-amino-acid polypeptide reads, in one-letter code: Large ribosomal subunit protein bL20 (117 aa).

The protein belongs to the bacterial ribosomal protein bL20 family.

In terms of biological role, binds directly to 23S ribosomal RNA and is necessary for the in vitro assembly process of the 50S ribosomal subunit. It is not involved in the protein synthesizing functions of that subunit. This chain is Large ribosomal subunit protein bL20, found in Neorickettsia sennetsu (strain ATCC VR-367 / Miyayama) (Ehrlichia sennetsu).